The chain runs to 231 residues: uncharacterized protein (231 aa).

A run of 3 helical transmembrane segments spans residues 6 to 26 (IKLI…YKYI), 39 to 59 (NIVS…STFS), and 66 to 86 (FCFQ…GYAF).

The protein resides in the cell membrane. This is an uncharacterized protein from Rickettsia prowazekii (strain Madrid E).